The primary structure comprises 337 residues: Protein-arginine kinase (337 aa).

Residues 12 to 240 (IVIASKVKIL…NKLILREKNQ (229 aa)) form the Phosphagen kinase C-terminal domain. Residues 15 to 19 (ASKVK), 162 to 166 (RTKVF), and 193 to 198 (KSIYNS) each bind ATP.

The protein belongs to the ATP:guanido phosphotransferase family.

The enzyme catalyses L-arginyl-[protein] + ATP = N(omega)-phospho-L-arginyl-[protein] + ADP + H(+). Its function is as follows. Catalyzes the specific phosphorylation of arginine residues in proteins. This Clostridium perfringens (strain 13 / Type A) protein is Protein-arginine kinase.